The primary structure comprises 382 residues: 8-amino-7-oxononanoate synthase (382 aa).

Substrate-binding residues include Arg21 and His131. Pyridoxal 5'-phosphate is bound by residues Ser178, His206, and Thr232. The residue at position 235 (Lys235) is an N6-(pyridoxal phosphate)lysine. Residue Thr349 coordinates substrate.

This sequence belongs to the class-II pyridoxal-phosphate-dependent aminotransferase family. BioF subfamily. Homodimer. Requires pyridoxal 5'-phosphate as cofactor.

The catalysed reaction is 6-carboxyhexanoyl-[ACP] + L-alanine + H(+) = (8S)-8-amino-7-oxononanoate + holo-[ACP] + CO2. It functions in the pathway cofactor biosynthesis; biotin biosynthesis. In terms of biological role, catalyzes the decarboxylative condensation of pimeloyl-[acyl-carrier protein] and L-alanine to produce 8-amino-7-oxononanoate (AON), [acyl-carrier protein], and carbon dioxide. The protein is 8-amino-7-oxononanoate synthase of Serratia marcescens.